The primary structure comprises 138 residues: Transcription antitermination protein NusB (138 aa).

The protein belongs to the NusB family.

Involved in transcription antitermination. Required for transcription of ribosomal RNA (rRNA) genes. Binds specifically to the boxA antiterminator sequence of the ribosomal RNA (rrn) operons. This is Transcription antitermination protein NusB from Coxiella burnetii (strain Dugway 5J108-111).